The following is a 375-amino-acid chain: MSTEEQNGVPLQRGSEFIADDVTSNKSNNTRRMLVKEYRKIGRGAFGTVVQAYLTQDKKNWLGPFAIKKVPAHTEYKSRELQILRIADHPNIVKLQYFFTHLSPQDNKVYQHLAMECLPETLQIEINRYVTNKLEMPLKHIRLYTYQIARGMLYLHGLGVCHRDIKPSNVLVDPETGVLKICDFGSAKKLEHNQPSISYICSRFYRAPELIIGCTQYTTQIDIWGLGCVMGEMLIGKAIFQGQEPLLQLREIAKLLGPPDKRFIFFSNPAYDGPLFSKPLFSGSSQQRFEKYFGHSGPDGIDLLMKILVYEPQQRLSPRRILAHQFFNELRNDDTFLPRGFTEPIKLPNLFDFNDFELQILGEFADKIKPTKVAE.

Position 2 is an N-acetylserine (serine 2). The 293-residue stretch at 35–327 folds into the Protein kinase domain; it reads VKEYRKIGRG…PRRILAHQFF (293 aa). ATP-binding positions include 41-49 and lysine 68; that span reads IGRGAFGTV. Aspartate 164 functions as the Proton acceptor in the catalytic mechanism. Residue serine 198 is modified to Phosphoserine. Tyrosine 199 is subject to Phosphotyrosine. Residue serine 202 is modified to Phosphoserine.

The protein belongs to the protein kinase superfamily. Ser/Thr protein kinase family. Post-translationally, phosphorylated at tyrosine and serine.

It catalyses the reaction L-seryl-[protein] + ATP = O-phospho-L-seryl-[protein] + ADP + H(+). It carries out the reaction L-threonyl-[protein] + ATP = O-phospho-L-threonyl-[protein] + ADP + H(+). The enzyme catalyses L-tyrosyl-[protein] + ATP = O-phospho-L-tyrosyl-[protein] + ADP + H(+). Functionally, may be an autophosphorylating tyrosine kinase, a bifunctional (serine/tyrosine-specific) protein kinase, or a serine kinase that is a substrate for an associated tyrosine kinase. MCK1 is a transcriptional activator of IME1, it stimulates spore maturation, and play a positive regulatory role in both mitotic centromere function and activation of early meiotic gene expression. The chain is Protein kinase MCK1 (MCK1) from Saccharomyces cerevisiae (strain ATCC 204508 / S288c) (Baker's yeast).